Reading from the N-terminus, the 411-residue chain is Multidrug resistance protein MdtG (411 aa).

10 consecutive transmembrane segments (helical) span residues leucine 14–phenylalanine 34, leucine 56–alanine 76, alanine 89–leucine 109, alanine 113–valine 133, threonine 144–alanine 164, proline 171–valine 191, isoleucine 219–isoleucine 239, leucine 254–proline 274, isoleucine 288–threonine 308, and alanine 376–leucine 396.

It belongs to the major facilitator superfamily. DHA1 family. MdtG (TC 2.A.1.2.20) subfamily.

It is found in the cell inner membrane. This Serratia proteamaculans (strain 568) protein is Multidrug resistance protein MdtG.